The chain runs to 234 residues: Glycoprotein BDLF3 (234 aa).

A signal peptide spans 1-28 (MAHARDKAGAVMAMILICETSLIWTSSG). The tract at residues 29–62 (SSTASAGNVTGTTAVTTPSPSASGPSTNQSTTLT) is disordered. N-linked (GlcNAc...) asparagine; by host glycosylation is found at N36, N56, N77, N96, N101, N110, N127, N144, and N159. The disordered stretch occupies residues 116–138 (AGTGTSTGVTSNVTTRSSSTTSA). Residues 187–207 (LVFVGLTFLMLILIFAAGLMM) form a helical membrane-spanning segment.

This sequence belongs to the Epstein-Barr virus BDLF3 protein family.

The protein resides in the membrane. This Homo sapiens (Human) protein is Glycoprotein BDLF3.